A 342-amino-acid chain; its full sequence is Glycerol-3-phosphate dehydrogenase [NAD(P)+] (342 aa).

Residues Trp-11, Arg-33, and Lys-112 each contribute to the NADPH site. Sn-glycerol 3-phosphate-binding residues include Lys-112, Gly-147, and Ser-149. Residue Ala-151 participates in NADPH binding. Sn-glycerol 3-phosphate is bound by residues Lys-202, Asp-255, Ser-265, Arg-266, and Asn-267. Catalysis depends on Lys-202, which acts as the Proton acceptor. Arg-266 serves as a coordination point for NADPH. NADPH contacts are provided by Val-290 and Glu-292.

The protein belongs to the NAD-dependent glycerol-3-phosphate dehydrogenase family.

It localises to the cytoplasm. It catalyses the reaction sn-glycerol 3-phosphate + NAD(+) = dihydroxyacetone phosphate + NADH + H(+). The catalysed reaction is sn-glycerol 3-phosphate + NADP(+) = dihydroxyacetone phosphate + NADPH + H(+). Its pathway is membrane lipid metabolism; glycerophospholipid metabolism. Catalyzes the reduction of the glycolytic intermediate dihydroxyacetone phosphate (DHAP) to sn-glycerol 3-phosphate (G3P), the key precursor for phospholipid synthesis. This chain is Glycerol-3-phosphate dehydrogenase [NAD(P)+], found in Cupriavidus metallidurans (strain ATCC 43123 / DSM 2839 / NBRC 102507 / CH34) (Ralstonia metallidurans).